A 460-amino-acid polypeptide reads, in one-letter code: Cysteine proteinase 7 (460 aa).

Positions 1-17 (MKVLSALCVLLVSVATA) are cleaved as a signal peptide. The propeptide at 18 to 111 (KQQLSEVEYR…TESDKIFDAS (94 aa)) is activation peptide. 2 disulfides stabilise this stretch: Cys131–Cys176 and Cys167–Cys210. Cys134 is an active-site residue. 2 N-linked (GlcNAc...) asparagine glycosylation sites follow: Asn226 and Asn252. Cys268 and Cys445 are disulfide-bonded. Residue His275 is part of the active site. Positions 285-409 (GSGSSGSHGG…GSSSGSNSNG (125 aa)) are disordered. The span at 294–359 (GSQSQSAGSD…QSGSQSGNSG (66 aa)) shows a compositional bias: low complexity. Gly residues predominate over residues 367–385 (AGSGSGSGSGSGSGSGSGS). Low complexity predominate over residues 386-409 (VSGSASGSASGSASGSSSGSNSNG). Residue Asn423 is part of the active site.

The protein belongs to the peptidase C1 family. Post-translationally, glycosylated; contains GlcNAc-alpha-1-P-Ser residues. Also N-glycosylated.

It localises to the lysosome. The polypeptide is Cysteine proteinase 7 (cprG) (Dictyostelium discoideum (Social amoeba)).